The sequence spans 371 residues: Dual-specificity RNA methyltransferase RlmN (371 aa).

Catalysis depends on glutamate 97, which acts as the Proton acceptor. Residues 103 to 341 enclose the Radical SAM core domain; that stretch reads DGDRATLCVS…VTVRTTRGDD (239 aa). A disulfide bond links cysteine 110 and cysteine 346. Residues cysteine 117, cysteine 121, and cysteine 124 each contribute to the [4Fe-4S] cluster site. S-adenosyl-L-methionine is bound by residues 171 to 172, serine 203, 225 to 227, and asparagine 303; these read GE and SLH. Catalysis depends on cysteine 346, which acts as the S-methylcysteine intermediate.

This sequence belongs to the radical SAM superfamily. RlmN family. It depends on [4Fe-4S] cluster as a cofactor.

It is found in the cytoplasm. It carries out the reaction adenosine(2503) in 23S rRNA + 2 reduced [2Fe-2S]-[ferredoxin] + 2 S-adenosyl-L-methionine = 2-methyladenosine(2503) in 23S rRNA + 5'-deoxyadenosine + L-methionine + 2 oxidized [2Fe-2S]-[ferredoxin] + S-adenosyl-L-homocysteine. It catalyses the reaction adenosine(37) in tRNA + 2 reduced [2Fe-2S]-[ferredoxin] + 2 S-adenosyl-L-methionine = 2-methyladenosine(37) in tRNA + 5'-deoxyadenosine + L-methionine + 2 oxidized [2Fe-2S]-[ferredoxin] + S-adenosyl-L-homocysteine. Its function is as follows. Specifically methylates position 2 of adenine 2503 in 23S rRNA and position 2 of adenine 37 in tRNAs. m2A2503 modification seems to play a crucial role in the proofreading step occurring at the peptidyl transferase center and thus would serve to optimize ribosomal fidelity. The polypeptide is Dual-specificity RNA methyltransferase RlmN (Marinomonas sp. (strain MWYL1)).